Here is a 204-residue protein sequence, read N- to C-terminus: Matrix-remodeling-associated protein 7 (204 aa).

The helical transmembrane segment at 7–27 threads the bilayer; the sequence is LLAALPALATALALLLAWLLV. Residues 32-148 are disordered; that stretch reads AASPEPARAP…FSFKYSPGKL (117 aa). The span at 38–47 shows a compositional bias: pro residues; that stretch reads ARAPPEPAPP. Over residues 63–103 the composition is skewed to low complexity; that stretch reads EPAASPAGPEEPGEPAGLGELGEPAGPGEPEGPGDPAAAPA. A compositionally biased stretch (basic and acidic residues) spans 110–126; the sequence is VEARQEEEQDLDGEKGP. At Ser191 the chain carries Phosphoserine.

It localises to the membrane. The chain is Matrix-remodeling-associated protein 7 (MXRA7) from Homo sapiens (Human).